The primary structure comprises 233 residues: Serine-rich 25 kDa antigen protein (233 aa).

The tract at residues 35 to 219 (KNEASPEKLE…DNNNLDAASS (185 aa)) is disordered. Residues 38 to 53 (ASPEKLEEAEEKEKSS) show a composition bias toward basic and acidic residues. Acidic residues predominate over residues 61–71 (SNEDNEDDEDE). Tandem repeats lie at residues 82 to 93 (SSSDKPDNKPEA), 102 to 113 (SSSDKPDNKPEA), 114 to 125 (SSSDKPDNKPEA), 126 to 137 (SSSDKPDNKPEA), 138 to 149 (SSSDKPDNKPEA), 150 to 161 (SSSDKPDNKPEA), 162 to 169 (SSTNKPEA), 170 to 177 (SSTNKPEA), 178 to 185 (SSTNKPEA), and 186 to 193 (SSTNKPEA). The interval 82–161 (SSSDKPDNKP…SDKPDNKPEA (80 aa)) is 6 X 12 AA tandem repeats of S-S-S-D-K-P-D-N-K-P-E-A. Residues 83-159 (SSDKPDNKPE…SSSDKPDNKP (77 aa)) are compositionally biased toward basic and acidic residues. The span at 160-192 (EASSTNKPEASSTNKPEASSTNKPEASSTNKPE) shows a compositional bias: polar residues. Positions 162-193 (SSTNKPEASSTNKPEASSTNKPEASSTNKPEA) are 4 X 8 AA tandem repeats of S-S-T-N-K-P-E-A. The segment covering 193 to 219 (ASSTSNSNDKSGSSSDNDNNNLDAASS) has biased composition (low complexity).

Post-translationally, phosphorylated on serine residue(s). In terms of processing, O-glycosylated; glycans consist of single N-acetylglucosamine residues. O-acylated; acyl group is probably palmitate, not myristate.

Its subcellular location is the cell membrane. In terms of biological role, plays a role in the adhesion to host cells. Involved in the adhesion to host apoptotic cells thereby facilitating their phagocytosis. The chain is Serine-rich 25 kDa antigen protein from Entamoeba histolytica (strain ATCC 30459 / HM-1:IMSS / ABRM).